The following is a 403-amino-acid chain: UPF0229 protein CKR_0568 (403 aa).

Residues 71–109 (SSGVGSGDGSQKKGDRIGKAIKDRDGKGNQGAGNQEGED) form a disordered region. Residues 80 to 97 (SQKKGDRIGKAIKDRDGK) are compositionally biased toward basic and acidic residues.

Belongs to the UPF0229 family.

The sequence is that of UPF0229 protein CKR_0568 from Clostridium kluyveri (strain NBRC 12016).